A 332-amino-acid polypeptide reads, in one-letter code: Melanocortin receptor 4 (332 aa).

Topologically, residues methionine 1–glutamine 43 are extracellular. N-linked (GlcNAc...) asparagine glycans are attached at residues asparagine 2, asparagine 17, and asparagine 26. 2 disulfide bridges follow: cysteine 40/cysteine 279 and cysteine 271/cysteine 277. A helical transmembrane segment spans residues leucine 44–isoleucine 69. Residues alanine 70–phenylalanine 81 are Cytoplasmic-facing. The helical transmembrane segment at phenylalanine 82–leucine 106 threads the bilayer. Ca(2+)-binding residues include glutamate 100, aspartate 122, and aspartate 126. The Extracellular segment spans residues leucine 107–asparagine 123. Residues valine 124 to valine 145 traverse the membrane as a helical segment. The Cytoplasmic portion of the chain corresponds to aspartate 146–arginine 165. Residues valine 166–isoleucine 186 traverse the membrane as a helical segment. At tyrosine 187–threonine 191 the chain is on the extracellular side. The chain crosses the membrane as a helical span at residues alanine 192 to methionine 215. Topologically, residues phenylalanine 216–threonine 248 are cytoplasmic. The chain crosses the membrane as a helical span at residues isoleucine 249 to cysteine 271. Residues proline 272–phenylalanine 280 lie on the Extracellular side of the membrane. A helical transmembrane segment spans residues methionine 281–leucine 304. At arginine 305–tyrosine 332 the chain is on the cytoplasmic side. Cysteine 318 is lipidated: S-palmitoyl cysteine.

This sequence belongs to the G-protein coupled receptor 1 family. In terms of assembly, homodimer; disulfide-linked, also forms higher order oligomers. Interacts with GNAS. Interacts with ATRNL1. Interacts with MGRN1; this interaction competes with GNAS-binding and thus inhibits agonist-induced cAMP production. Interacts with MRAP and MRAP2; these associated factors increase ligand-sensitivity and generation of cAMP.

The protein localises to the cell membrane. In terms of biological role, hormone receptor that acts as a key component of the leptin-melanocortin pathway at the intersection of homeostatic maintenance of energetic state. Plays a role in regulating food intake: activation by a stimulating hormone such as anorexigenic alpha-melanocyte stimulating hormone (alpha-MSH) inhibits appetite, whereas binding to a natural antagonist like Agouti-related protein/AGRP promotes appetite. G-protein-coupled receptor that activates conventional Galphas signaling leading to induction of anorexogenic signaling in the hypothalamus to result in negative energy balance. Regulates the firing activity of neurons from the hypothalamus by alpha-MSH and AGRP independently of Galphas signaling by ligand-induced coupling of closure of inwardly rectifying potassium channel KCNJ13. In intestinal epithelial cells, plays a role in the inhibition of hepatic glucose production via nesfatin-1/NUCB2 leading to increased cyclic adenosine monophosphate (cAMP) levels and glucagon-like peptide 1 (GLP-1) secretion in the intestinal epithelium. The sequence is that of Melanocortin receptor 4 (MC4R) from Vulpes vulpes (Red fox).